The following is a 116-amino-acid chain: Large ribosomal subunit protein bL19 (116 aa).

The protein belongs to the bacterial ribosomal protein bL19 family.

In terms of biological role, this protein is located at the 30S-50S ribosomal subunit interface and may play a role in the structure and function of the aminoacyl-tRNA binding site. The chain is Large ribosomal subunit protein bL19 from Shewanella loihica (strain ATCC BAA-1088 / PV-4).